We begin with the raw amino-acid sequence, 144 residues long: Methylglyoxal synthase (144 aa).

An MGS-like domain is found at 1-144; the sequence is MNIALIAHDE…EEEQRKFLTD (144 aa). Substrate is bound by residues His-8, Lys-12, 34 to 37, and 54 to 55; these read TGTT and SG. The Proton donor/acceptor role is filled by Asp-60. Position 87 (His-87) interacts with substrate.

This sequence belongs to the methylglyoxal synthase family.

It catalyses the reaction dihydroxyacetone phosphate = methylglyoxal + phosphate. Its function is as follows. Catalyzes the formation of methylglyoxal from dihydroxyacetone phosphate. The protein is Methylglyoxal synthase of Exiguobacterium sibiricum (strain DSM 17290 / CCUG 55495 / CIP 109462 / JCM 13490 / 255-15).